Reading from the N-terminus, the 389-residue chain is Na(+)/H(+) antiporter NhaA (389 aa).

The next 11 membrane-spanning stretches (helical) occupy residues 24–44, 56–76, 94–114, 122–142, 152–172, 176–196, 216–236, 259–279, 291–311, 326–346, and 363–383; these read ILLILCTILSLSIANSLAGPA, LSIEHWVNDALMAVFFLFVGL, LLPIFAAIGGIGVPALIHYTL, AGTGIPMATDIAFALGVLALL, VFLTALAVMDDLGAIIVIAMF, QFSLVYLLSALAVFGLLLVLN, FLMLKSGVHATIAGVLLAFAI, PVAFIILPIFALANTGIVIGS, LGIIGGLVFGKPLGIALLSFV, WTHIVGAGILGGIGFTMSIFI, and MAILMASVAAGGLGFLWLSFF.

It belongs to the NhaA Na(+)/H(+) (TC 2.A.33) antiporter family.

Its subcellular location is the cell inner membrane. It catalyses the reaction Na(+)(in) + 2 H(+)(out) = Na(+)(out) + 2 H(+)(in). Its function is as follows. Na(+)/H(+) antiporter that extrudes sodium in exchange for external protons. The polypeptide is Na(+)/H(+) antiporter NhaA (Dechloromonas aromatica (strain RCB)).